An 885-amino-acid chain; its full sequence is MGEGALAPGLQLLLRACEQGDTDTARRLLEPGGEPVAGSEAGAEPAGPEAARAVEAGTPVPVDCSDEAGNSALQLAAAGGHEPLVRFLLRRGASVNSRNHYGWSALMQAARCGHASVAHLLLDHGADVNAQNRLGASVLTVASRGGHLGVVKLLLEAGATVDHRNPSGESTASGGSRDELLGITALMAAVQHGHEAVVRLLMEWGADPNHTARTVGWSPLMLAALLGKLSVVQQLVEKGANPDHLGVLEKTAFEVALDRKHRDLADYLDPLTTVRPKTDEEKRRPDIFHALKMGNFQLVKEIADEDPNHVNLVNGDGATPLMLAAVTGQLPLVQLLVEKHADMNKQDSVHGWTALMQATYHGNKEIVKYLLNQGADVTLRAKNGYTAFDLVMLLNDPDTELVRLLASVCMQVNKDRGGRPSHRPPLPHSKARQPWSIPMLPDDKGGLKSWWSRMSNRFRKLKLMQTLPRGLAANQPLPFSDEPELALDSTMRAPPQDRTNHLGPPEAAHAAKDSGPGNPRREKDDVLLTTMLRNGAPFPRLPSDKLKAVIPPFLPPSSFELWSSDRSRTCPNGKADPMKTVLPPRASRAHPVGCVGTDGAAGRPVKFPSISRSPTSPASSGNFNHSPHSSGGASGVGSMSRLGGELHNRSGGSVDSVLSQIAAQRKKAAGLCEQKPPCQQSSPVGPATGSSPPELPASLLGSGSGSSNVTSSSKKLDPGKRPPSGTSATSKSTSPTLTPSPSPKGHTAESSVSSSSSHRQSKSSGGSSSGTITDEDELTGILKKLSLEKYQPIFEEQEVDMEAFLTLTDGDLQELGIKTDGSRQQILAAISELNAGKGRERQILQETIHNFHSSFESSASNTRAPGNSPCMAGWVRPEETVSSRR.

10 ANK repeats span residues 8-37, 68-97, 101-130, 134-163, 181-210, 215-244, 282-312, 316-345, 350-379, and 383-414; these read PGLQLLLRACEQGDTDTARRLLEPGGEPVA, AGNSALQLAAAGGHEPLVRFLLRRGASVNS, YGWSALMQAARCGHASVAHLLLDHGADVNA, LGASVLTVASRGGHLGVVKLLLEAGATVDH, LGITALMAAVQHGHEAVVRLLMEWGADPNH, VGWSPLMLAALLGKLSVVQQLVEKGANPDH, KRRPDIFHALKMGNFQLVKEIADEDPNHVNL, DGATPLMLAAVTGQLPLVQLLVEKHADMNK, HGWTALMQATYHGNKEIVKYLLNQGADVTL, and NGYTAFDLVMLLNDPDTELVRLLASVCMQVNK. N129 is subject to 3-hydroxyasparagine. Disordered regions lie at residues 415–439, 491–522, 563–775, and 855–885; these read DRGGRPSHRPPLPHSKARQPWSIPM, MRAPPQDRTNHLGPPEAAHAAKDSGPGNPRRE, SSDR…ITDE, and FESSASNTRAPGNSPCMAGWVRPEETVSSRR. Over residues 608 to 640 the composition is skewed to low complexity; that stretch reads PSISRSPTSPASSGNFNHSPHSSGGASGVGSMS. S650 carries the post-translational modification Phosphoserine. Polar residues predominate over residues 650-662; sequence SGGSVDSVLSQIA. 2 stretches are compositionally biased toward low complexity: residues 689 to 713 and 722 to 739; these read GSSPPELPASLLGSGSGSSNVTSSS and PPSGTSATSKSTSPTLTP. 2 positions are modified to phosphoserine: S734 and S742. The span at 750-770 shows a compositional bias: low complexity; it reads SSVSSSSSHRQSKSSGGSSSG. In terms of domain architecture, SAM spans 773–836; the sequence is TDEDELTGIL…LAAISELNAG (64 aa). Over residues 855–865 the composition is skewed to polar residues; that stretch reads FESSASNTRAP. Basic and acidic residues predominate over residues 876-885; the sequence is RPEETVSSRR.

Homooligomer. Interacts with NEK8. Central component of a complex containing at least ANKS6, INVS, NEK8 and NPHP3. ANKS6 may organize complex assembly by linking INVS and NPHP3 to NEK8 and INVS may target the complex to the proximal ciliary axoneme. Interacts (via SAM domain) with BICC1 (via KH domains) in an RNA-dependent manner. Interacts (via SAM domain) with ANKS3 (via SAM domain). In terms of processing, hydroxylated at Asn-129, most probably by HIF1AN. This hydroxylation results in decreased NEK8-binding. In terms of tissue distribution, widely expressed with moderate level in brain, skeletal muscle and testis. Expressed in renal tubules.

The protein resides in the cell projection. The protein localises to the cilium. It is found in the cytoplasm. Required for renal function. The chain is Ankyrin repeat and SAM domain-containing protein 6 (Anks6) from Rattus norvegicus (Rat).